A 171-amino-acid chain; its full sequence is Ribosome maturation factor RimM (171 aa).

The PRC barrel domain occupies 97-170 (EGEYYYHEII…LVTIHVMEGL (74 aa)).

The protein belongs to the RimM family. In terms of assembly, binds ribosomal protein uS19.

It is found in the cytoplasm. An accessory protein needed during the final step in the assembly of 30S ribosomal subunit, possibly for assembly of the head region. Essential for efficient processing of 16S rRNA. May be needed both before and after RbfA during the maturation of 16S rRNA. It has affinity for free ribosomal 30S subunits but not for 70S ribosomes. This chain is Ribosome maturation factor RimM, found in Bacillus thuringiensis (strain Al Hakam).